Here is a 377-residue protein sequence, read N- to C-terminus: Apelin receptor (377 aa).

The Extracellular segment spans residues 1-28 (MEDDGYNYYGADNQSECDYADWKPSGAL). N-linked (GlcNAc...) asparagine glycosylation is present at Asn-13. 2 cysteine pairs are disulfide-bonded: Cys-17/Cys-279 and Cys-100/Cys-179. Residues 29–52 (IPAIYMLVFLLGTTGNGLVLWTVF) traverse the membrane as a helical segment. Over 53–62 (RTSREKRRSA) the chain is Cytoplasmic. Residues 63–84 (DIFIASLAVADLTFVVTLPLWA) traverse the membrane as a helical segment. The Extracellular portion of the chain corresponds to 85–97 (TYTYREFDWPFGT). A helical transmembrane segment spans residues 98–123 (FSCKLSSYLIFVNMYASVFCLTGLSF). Residues 124-144 (DRYLAIVRPVANARLRLRVSG) are Cytoplasmic-facing. Residues 145-162 (AVATAVLWVLAALLAVPV) traverse the membrane as a helical segment. Topologically, residues 163-196 (MVFRSTDASENGTKIQCYMDYSMVATSNSEWAWE) are extracellular. An N-linked (GlcNAc...) asparagine glycan is attached at Asn-173. Residues 197-221 (VGLGVSSTAVGFVVPFTIMLTCYFF) form a helical membrane-spanning segment. The Cytoplasmic portion of the chain corresponds to 222–244 (IAQTIAGHFRKERIEGLRKRRRL). Residues 245 to 268 (LSIIVVLVVTFALCWMPYHLVKTL) form a helical membrane-spanning segment. Topologically, residues 269–287 (YMLGSLLHWPCDFDIFLMN) are extracellular. A helical membrane pass occupies residues 288–310 (VFPYCTCISYVNSCLNPFLYAFF). Over 311-377 (DPRFRQACTS…IPYSQETLVD (67 aa)) the chain is Cytoplasmic. Residues 334–377 (HSSSAEKSASYSSGHSQGPGPNMGKGGEQMHEKSIPYSQETLVD) form a disordered region. Positions 335-349 (SSSAEKSASYSSGHS) are enriched in low complexity.

The protein belongs to the G-protein coupled receptor 1 family. As to quaternary structure, homodimer; dimerization inhibits APLNR-mediated G protein and beta-arrestin signaling pathways compared to monomeric APLNR. Expressed in coronary endothelial cells (at protein level). Expressed in the embryo, allantoic and endothelial precursor cells of the yolk sac at 8 days post-coitum (dpc). Expressed in the secondary heart field and somite at 8.25 dpc. Expressed in fetal allantoic endothelial cells at 9 dpc. Expressed in the allantoid and the invading fetal vasculature of the placenta at 9.5 dpc. Expressed in endothelial cells adjacent to syncytiotrophoblast cells at 10.5 dpc. Expressed weakly in the embryonic heart at 11.5 dpc. Expressed in the adult heart. Expressed in endothelial cells and cardiomyocytes and weakly expressed in fibroblasts.

Its subcellular location is the cell membrane. In terms of biological role, g protein-coupled receptor for peptide hormones apelin (APLN) and apelin receptor early endogenous ligand (APELA), that plays a role in the regulation of normal cardiovascular function and fluid homeostasis. When acting as apelin receptor, activates both G(i) protein pathway that inhibits adenylate cyclase activity, and the beta-arrestin pathway leading to internalization of the receptor. APLNR/APJ receptor is also activated by mechanical strech in a G-protein-independent fashion to induce beta-arrestin signaling leading to cardiac hypertrophy. However, the presence of apelin ligand blunts cardiac hypertrophic induction from APLNR/APJ on response to pathological stimuli. Plays a key role in early development such as gastrulation, blood vessels formation and heart morphogenesis by acting as a receptor for APELA hormone. May promote angioblast migration toward the embryonic midline, i.e. the position of the future vessel formation, during vasculogenesis. Promotes sinus venosus (SV)-derived endothelial cells migration into the developing heart to promote coronary blood vessel development. Also plays a role in various processes in adults such as regulation of blood vessel formation, blood pressure and heart contractility and protection from cardiac hypertrophy and heart failure. This is Apelin receptor from Mus musculus (Mouse).